Reading from the N-terminus, the 85-residue chain is uncharacterized protein (85 aa).

Helical transmembrane passes span 4–24, 27–47, and 61–81; these read LTLC…LGGA, SPWL…LIGE, and RLLL…LYLA.

The protein resides in the cell membrane. This is an uncharacterized protein from Pseudomonas aeruginosa (strain ATCC 15692 / DSM 22644 / CIP 104116 / JCM 14847 / LMG 12228 / 1C / PRS 101 / PAO1).